Consider the following 122-residue polypeptide: Acidic phospholipase A2 (122 aa).

Cystine bridges form between cysteine 26-cysteine 115, cysteine 28-cysteine 44, cysteine 43-cysteine 95, cysteine 49-cysteine 122, cysteine 50-cysteine 88, cysteine 57-cysteine 81, and cysteine 75-cysteine 86. The Ca(2+) site is built by tyrosine 27, glycine 29, and glycine 31. The active site involves histidine 47. Aspartate 48 serves as a coordination point for Ca(2+). The active site involves aspartate 89.

It belongs to the phospholipase A2 family. Group II subfamily. D49 sub-subfamily. Ca(2+) serves as cofactor. Post-translationally, contains 7 disulfide bonds. As to expression, expressed by the venom gland.

It localises to the secreted. It catalyses the reaction a 1,2-diacyl-sn-glycero-3-phosphocholine + H2O = a 1-acyl-sn-glycero-3-phosphocholine + a fatty acid + H(+). Snake venom phospholipase A2 (PLA2) that displays low systemic toxicity and causes severe symptoms only at very high concentrations (15 mg/kg). Has neither coagulant nor anticoagulant activity. PLA2 catalyzes the calcium-dependent hydrolysis of the 2-acyl groups in 3-sn-phosphoglycerides. This is Acidic phospholipase A2 from Bothrops ammodytoides (Yararanata).